The sequence spans 98 residues: NADH-ubiquinone oxidoreductase chain 4L (98 aa).

The next 3 helical transmembrane spans lie at 1–21 (MPFI…GLLI), 29–49 (SLLC…TMTL), and 61–81 (IILL…LILI).

The protein belongs to the complex I subunit 4L family. As to quaternary structure, core subunit of respiratory chain NADH dehydrogenase (Complex I) which is composed of 45 different subunits.

The protein localises to the mitochondrion inner membrane. It carries out the reaction a ubiquinone + NADH + 5 H(+)(in) = a ubiquinol + NAD(+) + 4 H(+)(out). In terms of biological role, core subunit of the mitochondrial membrane respiratory chain NADH dehydrogenase (Complex I) which catalyzes electron transfer from NADH through the respiratory chain, using ubiquinone as an electron acceptor. Part of the enzyme membrane arm which is embedded in the lipid bilayer and involved in proton translocation. In Cebus albifrons (White-fronted capuchin), this protein is NADH-ubiquinone oxidoreductase chain 4L (MT-ND4L).